Consider the following 29-residue polypeptide: Cycloviolacin-O22 (29 aa).

The cyclopeptide (Gly-Asn) cross-link spans 1–29 (GLPICGETCVGGTCNTPGCTCSWPVCTRN). Intrachain disulfides connect Cys5–Cys19, Cys9–Cys21, and Cys14–Cys26.

In terms of processing, this is a cyclic peptide. Expressed in roots and runners but not in leaves, petals and petioles (at protein level).

Its function is as follows. Probably participates in a plant defense mechanism. The polypeptide is Cycloviolacin-O22 (Viola odorata (Sweet violet)).